Consider the following 349-residue polypeptide: Crinkler effector protein 5 (349 aa).

A signal peptide spans 1 to 17 (MVKLFCSIVGVAGSPFS). The segment at 18 to 57 (VEVNEGKTVDDLKKAIKAENLDDPTLRNVAPKNLQLFLAK) is LQLFLAK domain. Residues 58 to 108 (KGDAWLRYNEDLDTYLQSEIDTSSYLHMRASWKLSKPTLFGPDVSLGEDVV) are DWL domain. The short motif at 109-115 (HVLVVVP) is the HVLVXXP motif element.

This sequence belongs to the Crinkler effector family.

Its subcellular location is the secreted. It localises to the host nucleus. Functionally, secreted effector that elicits necrosis in host plants, a characteristic of plant innate immunity. The sequence is that of Crinkler effector protein 5 from Phytophthora infestans (Potato late blight agent).